The primary structure comprises 379 residues: Hydrogenase expression/formation protein HupD (379 aa).

Positions 36, 64, and 67 each coordinate Fe cation.

It belongs to the HypD family.

The polypeptide is Hydrogenase expression/formation protein HupD (hupD) (Azotobacter chroococcum mcd 1).